Consider the following 336-residue polypeptide: ATP-dependent 6-phosphofructokinase 3 (336 aa).

Residues G10, 72–73 (RE), and 108–111 (GNGT) each bind ATP. N109 contributes to the Mg(2+) binding site. Residues 131–133 (TID), R168, 175–177 (MGH), E228, R255, and 261–264 (YIQR) contribute to the substrate site. The active-site Proton acceptor is D133.

It belongs to the phosphofructokinase type A (PFKA) family. Mixed-substrate PFK group III subfamily. In terms of assembly, homodimer or homotetramer. It depends on Mg(2+) as a cofactor.

The protein resides in the cytoplasm. The enzyme catalyses beta-D-fructose 6-phosphate + ATP = beta-D-fructose 1,6-bisphosphate + ADP + H(+). It functions in the pathway carbohydrate degradation; glycolysis; D-glyceraldehyde 3-phosphate and glycerone phosphate from D-glucose: step 3/4. In terms of biological role, catalyzes the phosphorylation of D-fructose 6-phosphate to fructose 1,6-bisphosphate by ATP, the first committing step of glycolysis. The polypeptide is ATP-dependent 6-phosphofructokinase 3 (Bacteroides thetaiotaomicron (strain ATCC 29148 / DSM 2079 / JCM 5827 / CCUG 10774 / NCTC 10582 / VPI-5482 / E50)).